Reading from the N-terminus, the 470-residue chain is Iron-sulfur cluster assembly SufBD family protein ABCI9 (470 aa).

The protein belongs to the iron-sulfur cluster assembly SufBD family.

This Arabidopsis thaliana (Mouse-ear cress) protein is Iron-sulfur cluster assembly SufBD family protein ABCI9 (ABCI9).